The primary structure comprises 497 residues: D-gluconate dehydratase (497 aa).

Glutamate 303 provides a ligand contact to Mg(2+). Catalysis depends on histidine 305, which acts as the Proton donor. Residues glutamate 329 and glutamate 355 each coordinate Mg(2+). Catalysis depends on histidine 405, which acts as the Proton acceptor.

This sequence belongs to the mandelate racemase/muconate lactonizing enzyme family. GaD subfamily. Mg(2+) serves as cofactor.

The enzyme catalyses D-gluconate = 2-dehydro-3-deoxy-D-gluconate + H2O. It participates in carbohydrate acid metabolism; D-gluconate degradation. Its function is as follows. Involved in the degradation of glucose via the Entner-Doudoroff pathway. Catalyzes the dehydration of gluconate to produce 2-keto-3-deoxygluconate (KDG). It is not able to use D-galactonate as substrate. The polypeptide is D-gluconate dehydratase (gad) (Thermoproteus tenax).